Reading from the N-terminus, the 461-residue chain is UDP-N-acetylmuramate--L-alanine ligase (461 aa).

Residue 111-117 (GAHGKTT) coordinates ATP.

This sequence belongs to the MurCDEF family.

It localises to the cytoplasm. The catalysed reaction is UDP-N-acetyl-alpha-D-muramate + L-alanine + ATP = UDP-N-acetyl-alpha-D-muramoyl-L-alanine + ADP + phosphate + H(+). Its pathway is cell wall biogenesis; peptidoglycan biosynthesis. Cell wall formation. The polypeptide is UDP-N-acetylmuramate--L-alanine ligase (Pelotomaculum thermopropionicum (strain DSM 13744 / JCM 10971 / SI)).